The primary structure comprises 390 residues: Putative 8-amino-7-oxononanoate synthase (390 aa).

Arg20 is a substrate binding site. 107–108 (GY) serves as a coordination point for pyridoxal 5'-phosphate. His132 contributes to the substrate binding site. Pyridoxal 5'-phosphate is bound by residues Ser181, 206–209 (DDAH), and 237–240 (TLGK). Lys240 is subject to N6-(pyridoxal phosphate)lysine. A substrate-binding site is contributed by Thr356.

Belongs to the class-II pyridoxal-phosphate-dependent aminotransferase family. BioF subfamily. Homodimer. Pyridoxal 5'-phosphate is required as a cofactor.

The catalysed reaction is 6-carboxyhexanoyl-[ACP] + L-alanine + H(+) = (8S)-8-amino-7-oxononanoate + holo-[ACP] + CO2. It functions in the pathway cofactor biosynthesis; biotin biosynthesis. In terms of biological role, catalyzes the decarboxylative condensation of pimeloyl-[acyl-carrier protein] and L-alanine to produce 8-amino-7-oxononanoate (AON), [acyl-carrier protein], and carbon dioxide. The protein is Putative 8-amino-7-oxononanoate synthase (bioF) of Syntrophotalea carbinolica (strain DSM 2380 / NBRC 103641 / GraBd1) (Pelobacter carbinolicus).